Consider the following 660-residue polypeptide: Secretin PulD (660 aa).

The first 27 residues, Met-1–Ala-27, serve as a signal peptide directing secretion. An N0 region spans residues Glu-28–Gly-124. An N1 region spans residues Glu-126–Gly-190. Residues Asp-191–Ala-264 form an N2 region. Residues Gly-267–Asp-341 form an N3 region. The tract at residues Gln-346–Asp-596 is secretin. The interval Asp-598–Leu-660 is s domain.

This sequence belongs to the bacterial secretin family. GSP D subfamily. Forms a cylindrical channel with 15 subunits.

It localises to the cell outer membrane. In terms of biological role, involved in a type II secretion system (T2SS, formerly general secretion pathway, GSP) for the export of proteins. Required for the translocation of pullulanase. This subunit forms the outer membrane channel. The sequence is that of Secretin PulD (pulD) from Klebsiella pneumoniae.